A 65-amino-acid chain; its full sequence is Large ribosomal subunit protein bL35 (65 aa).

This sequence belongs to the bacterial ribosomal protein bL35 family.

The protein is Large ribosomal subunit protein bL35 of Prochlorococcus marinus subsp. pastoris (strain CCMP1986 / NIES-2087 / MED4).